Here is a 42-residue protein sequence, read N- to C-terminus: Large ribosomal subunit protein bL36 (42 aa).

The protein belongs to the bacterial ribosomal protein bL36 family.

This Wolbachia sp. subsp. Brugia malayi (strain TRS) protein is Large ribosomal subunit protein bL36.